Consider the following 702-residue polypeptide: Kinesin-like protein KIF3A (702 aa).

In terms of domain architecture, Kinesin motor spans 14 to 345 (NVKVVVRCRP…LRYANRAKNI (332 aa)). 100-107 (GQTGTGKT) is an ATP binding site. Positions 355 to 593 (PKDALLRQFQ…LSRELRLQML (239 aa)) form a coiled coil. Disordered stretches follow at residues 372–424 (KKLE…KMIE) and 667–702 (LMKL…SLLQ). The span at 376-400 (EGEEISGSDISGSEEDDDEEGEVGE) shows a compositional bias: acidic residues. The segment covering 410–424 (DQAGKKKVSPDKMIE) has biased composition (basic and acidic residues). The tract at residues 600–702 (PRDYQEMIEN…PETVIDSLLQ (103 aa)) is globular. Basic residues predominate over residues 675-690 (TSKGKARPKTGRRKRS). S690 is subject to Phosphoserine.

The protein belongs to the TRAFAC class myosin-kinesin ATPase superfamily. Kinesin family. Kinesin II subfamily. In terms of assembly, heterodimer of KIF3A and KIF3B. Interacts with CIMAP3. Interacts with CLN3. Interacts with DCTN1. Interacts with FLCN. Interacts with AP3B1.

Its subcellular location is the cytoplasm. It is found in the cytoskeleton. The protein localises to the cell projection. It localises to the cilium. The protein resides in the microtubule organizing center. Its subcellular location is the centrosome. It is found in the centriole. Its function is as follows. Microtubule-based anterograde translocator for membranous organelles. Plus end-directed microtubule sliding activity in vitro. Plays a role in primary cilia formation. Plays a role in centriole cohesion and subdistal appendage organization and function. Regulates the formation of the subdistal appendage via recruitment of DCTN1 to the centriole. Also required for ciliary basal feet formation and microtubule anchoring to mother centriole. The polypeptide is Kinesin-like protein KIF3A (KIF3A) (Macaca fascicularis (Crab-eating macaque)).